A 297-amino-acid chain; its full sequence is 4-hydroxy-tetrahydrodipicolinate synthase (297 aa).

Residue Thr-49 participates in pyruvate binding. Tyr-137 serves as the catalytic Proton donor/acceptor. Catalysis depends on Lys-166, which acts as the Schiff-base intermediate with substrate. Residue Ile-208 coordinates pyruvate.

This sequence belongs to the DapA family. As to quaternary structure, homotetramer; dimer of dimers.

Its subcellular location is the cytoplasm. It catalyses the reaction L-aspartate 4-semialdehyde + pyruvate = (2S,4S)-4-hydroxy-2,3,4,5-tetrahydrodipicolinate + H2O + H(+). Its pathway is amino-acid biosynthesis; L-lysine biosynthesis via DAP pathway; (S)-tetrahydrodipicolinate from L-aspartate: step 3/4. Catalyzes the condensation of (S)-aspartate-beta-semialdehyde [(S)-ASA] and pyruvate to 4-hydroxy-tetrahydrodipicolinate (HTPA). The polypeptide is 4-hydroxy-tetrahydrodipicolinate synthase (Parabacteroides distasonis (strain ATCC 8503 / DSM 20701 / CIP 104284 / JCM 5825 / NCTC 11152)).